The sequence spans 811 residues: Probable potassium transporter 16 (811 aa).

Over 1–66 the chain is Cytoplasmic; sequence MAQQQAGARG…GQESWMRTLR (66 aa). Residues 67-87 traverse the membrane as a helical segment; that stretch reads LGFQCVGILHADLGTSPLYVY. Residues 88 to 100 lie on the Extracellular side of the membrane; that stretch reads QNTFKYGIKHEDD. Residues 101–121 traverse the membrane as a helical segment; the sequence is IIGVLSLIIYSFVLFTMVKIV. Residues 122–190 are Cytoplasmic-facing; sequence FIALHANDDG…KSQLEKKPAK (69 aa). The helical transmembrane segment at 191–211 threads the bilayer; that stretch reads IAVFFLTIFATALAISDCVLN. Over 212–228 the chain is Extracellular; the sequence is PSVSVLSAVNGLKLRAP. A helical transmembrane segment spans residues 229 to 249; it reads HLTTDEVVWITVGILVVFFAV. At 250–256 the chain is on the cytoplasmic side; the sequence is QRFGTDK. Residues 257 to 277 form a helical membrane-spanning segment; that stretch reads IGYTFAPVVVVWLLLISGIGI. Over 278–310 the chain is Extracellular; sequence YDLVKYDVGVLRAFNPKYIIDYFRRNKKDGWVQ. A helical transmembrane segment spans residues 311–331; the sequence is LGEVLLTFTGTEALFADLGYF. Over 332–337 the chain is Cytoplasmic; that stretch reads SIKSIQ. A helical membrane pass occupies residues 338–358; the sequence is LSSTFVLLPSVLCTYIGQAAY. Residues 359-379 lie on the Extracellular side of the membrane; that stretch reads LRKHMDQQHIQNAFFNSIPRP. Residues 380–400 traverse the membrane as a helical segment; that stretch reads LFWPMFVLAIMTSVIGCQAMV. The Cytoplasmic segment spans residues 401–438; the sequence is SCAFATMSHLQTLNCFPRIKILHTSRRYSGQLYSPEVN. The chain crosses the membrane as a helical span at residues 439 to 459; sequence FFLCLLSCVITLSFRTTGFIV. At 460 to 463 the chain is on the extracellular side; that stretch reads KAHE. A helical transmembrane segment spans residues 464-484; the sequence is ICVVLVMVITTILMTIVMLLV. The Cytoplasmic segment spans residues 485–488; sequence WKVN. Residues 489-509 traverse the membrane as a helical segment; that stretch reads IWWIVLFFVVFMSTETVYLSA. Topologically, residues 510–519 are extracellular; the sequence is VLYKFTKGPY. A helical transmembrane segment spans residues 520–540; the sequence is MPLAMSAVLMVIMFVWHYVHV. The Cytoplasmic segment spans residues 541 to 811; it reads KRYKFELEHT…LLKVGITYEI (271 aa).

It belongs to the HAK/KUP transporter (TC 2.A.72.3) family.

The protein localises to the membrane. In terms of biological role, high-affinity potassium transporter. The chain is Probable potassium transporter 16 (HAK16) from Oryza sativa subsp. japonica (Rice).